We begin with the raw amino-acid sequence, 245 residues long: Ribonuclease PH (245 aa).

Phosphate-binding positions include Arg-86 and 124 to 126 (GTR).

The protein belongs to the RNase PH family. As to quaternary structure, homohexameric ring arranged as a trimer of dimers.

The enzyme catalyses tRNA(n+1) + phosphate = tRNA(n) + a ribonucleoside 5'-diphosphate. Phosphorolytic 3'-5' exoribonuclease that plays an important role in tRNA 3'-end maturation. Removes nucleotide residues following the 3'-CCA terminus of tRNAs; can also add nucleotides to the ends of RNA molecules by using nucleoside diphosphates as substrates, but this may not be physiologically important. Probably plays a role in initiation of 16S rRNA degradation (leading to ribosome degradation) during starvation. This Bacillus velezensis (strain DSM 23117 / BGSC 10A6 / LMG 26770 / FZB42) (Bacillus amyloliquefaciens subsp. plantarum) protein is Ribonuclease PH.